A 281-amino-acid chain; its full sequence is Arylamine N-acetyltransferase / N-hydroxyarylamine O-acetyltransferase (281 aa).

Cysteine 69 functions as the Acyl-thioester intermediate in the catalytic mechanism. Residues histidine 107 and aspartate 122 contribute to the active site.

The protein belongs to the arylamine N-acetyltransferase family. In terms of assembly, monomer and homodimer.

It is found in the cytoplasm. The enzyme catalyses an arylamine + acetyl-CoA = an N-acetylarylamine + CoA. It catalyses the reaction an N-hydroxyarylamine + acetyl-CoA = an N-acetoxyarylamine + CoA. With respect to regulation, inhibited by N-ethylmaleimide and iodoacetamide. In terms of biological role, catalyzes both the acetyl-CoA-dependent N-acetylation of aromatic amines and the O-acetylation of N-hydroxyarylamines. In vitro, catalyzes the O-acetylation of N-hydroxy-Glu-P-1, and the N-acetylation of isoniazid and 2-aminofluorene. The protein is Arylamine N-acetyltransferase / N-hydroxyarylamine O-acetyltransferase (nhoA) of Salmonella typhimurium (strain LT2 / SGSC1412 / ATCC 700720).